Here is a 344-residue protein sequence, read N- to C-terminus: Arginine N-succinyltransferase (344 aa).

Residue leucine 125 coordinates succinyl-CoA. The active-site Proton donor is the histidine 229.

Belongs to the arginine N-succinyltransferase family.

It catalyses the reaction succinyl-CoA + L-arginine = N(2)-succinyl-L-arginine + CoA + H(+). It functions in the pathway amino-acid degradation; L-arginine degradation via AST pathway; L-glutamate and succinate from L-arginine: step 1/5. Its function is as follows. Catalyzes the transfer of succinyl-CoA to arginine to produce N(2)-succinylarginine. The chain is Arginine N-succinyltransferase from Shigella sonnei (strain Ss046).